We begin with the raw amino-acid sequence, 503 residues long: Lysine--tRNA ligase (503 aa).

Positions 414 and 421 each coordinate Mg(2+).

This sequence belongs to the class-II aminoacyl-tRNA synthetase family. Homodimer. Mg(2+) is required as a cofactor.

It is found in the cytoplasm. The enzyme catalyses tRNA(Lys) + L-lysine + ATP = L-lysyl-tRNA(Lys) + AMP + diphosphate. The sequence is that of Lysine--tRNA ligase from Neisseria meningitidis serogroup A / serotype 4A (strain DSM 15465 / Z2491).